We begin with the raw amino-acid sequence, 439 residues long: N5-carboxyaminoimidazole ribonucleotide synthase (439 aa).

ATP is bound by residues Lys113, Lys160, 197–200 (EERV), Glu205, and 283–284 (NE). The 197-residue stretch at 117–313 (RRRLAALGAA…QFEQHLRAVL (197 aa)) folds into the ATP-grasp domain.

It belongs to the PurK/PurT family. As to quaternary structure, homodimer.

It catalyses the reaction 5-amino-1-(5-phospho-beta-D-ribosyl)imidazole + hydrogencarbonate + ATP = 5-carboxyamino-1-(5-phospho-D-ribosyl)imidazole + ADP + phosphate + 2 H(+). It functions in the pathway purine metabolism; IMP biosynthesis via de novo pathway; 5-amino-1-(5-phospho-D-ribosyl)imidazole-4-carboxylate from 5-amino-1-(5-phospho-D-ribosyl)imidazole (N5-CAIR route): step 1/2. Functionally, catalyzes the ATP-dependent conversion of 5-aminoimidazole ribonucleotide (AIR) and HCO(3)(-) to N5-carboxyaminoimidazole ribonucleotide (N5-CAIR). The polypeptide is N5-carboxyaminoimidazole ribonucleotide synthase (Mycobacterium leprae (strain TN)).